The primary structure comprises 332 residues: Lipoyl synthase (332 aa).

Residues C74, C79, C85, C100, C104, C107, and S314 each contribute to the [4Fe-4S] cluster site. The Radical SAM core domain occupies 85–303 (CFGKGTATFM…EEEAYKMGFT (219 aa)).

Belongs to the radical SAM superfamily. Lipoyl synthase family. [4Fe-4S] cluster serves as cofactor.

Its subcellular location is the cytoplasm. The enzyme catalyses [[Fe-S] cluster scaffold protein carrying a second [4Fe-4S](2+) cluster] + N(6)-octanoyl-L-lysyl-[protein] + 2 oxidized [2Fe-2S]-[ferredoxin] + 2 S-adenosyl-L-methionine + 4 H(+) = [[Fe-S] cluster scaffold protein] + N(6)-[(R)-dihydrolipoyl]-L-lysyl-[protein] + 4 Fe(3+) + 2 hydrogen sulfide + 2 5'-deoxyadenosine + 2 L-methionine + 2 reduced [2Fe-2S]-[ferredoxin]. Its pathway is protein modification; protein lipoylation via endogenous pathway; protein N(6)-(lipoyl)lysine from octanoyl-[acyl-carrier-protein]: step 2/2. In terms of biological role, catalyzes the radical-mediated insertion of two sulfur atoms into the C-6 and C-8 positions of the octanoyl moiety bound to the lipoyl domains of lipoate-dependent enzymes, thereby converting the octanoylated domains into lipoylated derivatives. In Paracidovorax citrulli (strain AAC00-1) (Acidovorax citrulli), this protein is Lipoyl synthase.